The following is a 432-amino-acid chain: Nuclear pore complex-interacting protein family member B8 (432 aa).

2 disordered regions span residues 260–280 (RMGR…NSLS) and 353–420 (SPLP…LRTR). Over residues 270-280 (QQHSITDNSLS) the composition is skewed to polar residues. The segment covering 374 to 402 (EVEKPPKPKRWRVDEVEQSPKPKRQREAE) has biased composition (basic and acidic residues). A compositionally biased stretch (basic residues) spans 408–420 (KPKRRRLSKLRTR).

Belongs to the NPIP family.

This chain is Nuclear pore complex-interacting protein family member B8 (NPIPB8), found in Homo sapiens (Human).